We begin with the raw amino-acid sequence, 293 residues long: Ribosomal protein L11 methyltransferase (293 aa).

Residues Thr-146, Gly-167, Asp-189, and Asn-230 each contribute to the S-adenosyl-L-methionine site.

The protein belongs to the methyltransferase superfamily. PrmA family.

It is found in the cytoplasm. It carries out the reaction L-lysyl-[protein] + 3 S-adenosyl-L-methionine = N(6),N(6),N(6)-trimethyl-L-lysyl-[protein] + 3 S-adenosyl-L-homocysteine + 3 H(+). Methylates ribosomal protein L11. The protein is Ribosomal protein L11 methyltransferase of Colwellia psychrerythraea (strain 34H / ATCC BAA-681) (Vibrio psychroerythus).